We begin with the raw amino-acid sequence, 83 residues long: Small ribosomal subunit protein uS17 (83 aa).

It belongs to the universal ribosomal protein uS17 family. Part of the 30S ribosomal subunit.

In terms of biological role, one of the primary rRNA binding proteins, it binds specifically to the 5'-end of 16S ribosomal RNA. The sequence is that of Small ribosomal subunit protein uS17 from Pseudoalteromonas atlantica (strain T6c / ATCC BAA-1087).